The following is a 104-amino-acid chain: L-rhamnose mutarotase (104 aa).

A substrate-binding site is contributed by Tyr18. His22 serves as the catalytic Proton donor. Substrate-binding positions include Tyr41 and 76–77; that span reads WW.

Belongs to the rhamnose mutarotase family. Homodimer.

It localises to the cytoplasm. The enzyme catalyses alpha-L-rhamnose = beta-L-rhamnose. It functions in the pathway carbohydrate metabolism; L-rhamnose metabolism. Involved in the anomeric conversion of L-rhamnose. This is L-rhamnose mutarotase from Clostridium beijerinckii (strain ATCC 51743 / NCIMB 8052) (Clostridium acetobutylicum).